Reading from the N-terminus, the 92-residue chain is MNPAIVVIIVLLVAALLIWACKAKKLDGLFNFGDPYYTSTVTPSVSPTTVLVTPPVPAAYPMYDVNYRYPFGVPWDIDVDRRRRYNWGRWRR.

The first 23 residues, 1-23, serve as a signal peptide directing secretion; the sequence is MNPAIVVIIVLLVAALLIWACKA.

This is an uncharacterized protein from Acheta domesticus (House cricket).